The sequence spans 146 residues: MTKTTMAVPGALLAAIALLSAAPAQAAAHRVTPGNWLYVTVTTGDARSSHISRLLTCDPPHGHAHAARACEELAAADGDITRIPPKRTFCPMIYAPVTADAHGEWNGRHVEYRHAFGNACGLEGETGAVFALSEQASDGPTPGLRS.

The first 26 residues, Met-1–Ala-26, serve as a signal peptide directing secretion. Disulfide bonds link Cys-57–Cys-70 and Cys-90–Cys-120.

The protein belongs to the protease inhibitor I16 (SSI) family.

The protein resides in the secreted. The protein is Putative serine protease inhibitor SAV_2156 of Streptomyces avermitilis (strain ATCC 31267 / DSM 46492 / JCM 5070 / NBRC 14893 / NCIMB 12804 / NRRL 8165 / MA-4680).